A 485-amino-acid chain; its full sequence is Cysteine--tRNA ligase (485 aa).

C29 contributes to the Zn(2+) binding site. The short motif at A31–H41 is the 'HIGH' region element. The tract at residues Q174–L198 is disordered. A compositionally biased stretch (basic and acidic residues) spans A185–A197. The Zn(2+) site is built by C227, H252, and E256. The 'KMSKS' region motif lies at K283 to S287. K286 provides a ligand contact to ATP.

Belongs to the class-I aminoacyl-tRNA synthetase family. In terms of assembly, monomer. Requires Zn(2+) as cofactor.

It localises to the cytoplasm. The catalysed reaction is tRNA(Cys) + L-cysteine + ATP = L-cysteinyl-tRNA(Cys) + AMP + diphosphate. This Micrococcus luteus (strain ATCC 4698 / DSM 20030 / JCM 1464 / CCM 169 / CCUG 5858 / IAM 1056 / NBRC 3333 / NCIMB 9278 / NCTC 2665 / VKM Ac-2230) (Micrococcus lysodeikticus) protein is Cysteine--tRNA ligase.